We begin with the raw amino-acid sequence, 616 residues long: Dihydroxy-acid dehydratase (616 aa).

Asp-81 contacts Mg(2+). Cys-122 contacts [2Fe-2S] cluster. Asp-123 and Lys-124 together coordinate Mg(2+). Lys-124 carries the post-translational modification N6-carboxylysine. Cys-195 contributes to the [2Fe-2S] cluster binding site. Glu-491 lines the Mg(2+) pocket. Residue Ser-517 is the Proton acceptor of the active site.

It belongs to the IlvD/Edd family. Homodimer. The cofactor is [2Fe-2S] cluster. Mg(2+) is required as a cofactor.

It catalyses the reaction (2R)-2,3-dihydroxy-3-methylbutanoate = 3-methyl-2-oxobutanoate + H2O. It carries out the reaction (2R,3R)-2,3-dihydroxy-3-methylpentanoate = (S)-3-methyl-2-oxopentanoate + H2O. The protein operates within amino-acid biosynthesis; L-isoleucine biosynthesis; L-isoleucine from 2-oxobutanoate: step 3/4. Its pathway is amino-acid biosynthesis; L-valine biosynthesis; L-valine from pyruvate: step 3/4. Functionally, functions in the biosynthesis of branched-chain amino acids. Catalyzes the dehydration of (2R,3R)-2,3-dihydroxy-3-methylpentanoate (2,3-dihydroxy-3-methylvalerate) into 2-oxo-3-methylpentanoate (2-oxo-3-methylvalerate) and of (2R)-2,3-dihydroxy-3-methylbutanoate (2,3-dihydroxyisovalerate) into 2-oxo-3-methylbutanoate (2-oxoisovalerate), the penultimate precursor to L-isoleucine and L-valine, respectively. This is Dihydroxy-acid dehydratase from Escherichia coli O17:K52:H18 (strain UMN026 / ExPEC).